A 278-amino-acid polypeptide reads, in one-letter code: Large ribosomal subunit protein uL24m (278 aa).

One can recognise a KOW domain in the interval 109-142; the sequence is FFPGDLVQVMVGKDKGRQGLVLTISRDSSEVVVD.

Belongs to the universal ribosomal protein uL24 family.

It is found in the mitochondrion. In Caenorhabditis briggsae, this protein is Large ribosomal subunit protein uL24m (mrpl-24).